The chain runs to 299 residues: ATP phosphoribosyltransferase (299 aa).

The protein belongs to the ATP phosphoribosyltransferase family. Long subfamily. Mg(2+) serves as cofactor.

Its subcellular location is the cytoplasm. It carries out the reaction 1-(5-phospho-beta-D-ribosyl)-ATP + diphosphate = 5-phospho-alpha-D-ribose 1-diphosphate + ATP. It participates in amino-acid biosynthesis; L-histidine biosynthesis; L-histidine from 5-phospho-alpha-D-ribose 1-diphosphate: step 1/9. With respect to regulation, feedback inhibited by histidine. Functionally, catalyzes the condensation of ATP and 5-phosphoribose 1-diphosphate to form N'-(5'-phosphoribosyl)-ATP (PR-ATP). Has a crucial role in the pathway because the rate of histidine biosynthesis seems to be controlled primarily by regulation of HisG enzymatic activity. The sequence is that of ATP phosphoribosyltransferase from Campylobacter jejuni subsp. jejuni serotype O:6 (strain 81116 / NCTC 11828).